The following is a 495-amino-acid chain: uncharacterized protein (495 aa).

The next 12 membrane-spanning stretches (helical) occupy residues 43 to 63 (IIIS…MPSI), 75 to 95 (TLVV…PLIF), 106 to 126 (PLNI…ALSV), 128 to 148 (LAMF…GLGI), 168 to 188 (IYFL…GFIA), 196 to 216 (WEFW…VVFL), 284 to 304 (PIMI…YLLF), 323 to 343 (GLTY…LLPL), 366 to 386 (PMAF…GWTV), 390 to 410 (VFWF…VMTF), 426 to 446 (ASAM…FPLF), and 461 to 481 (SLLA…YMFG).

It belongs to the major facilitator superfamily. CAR1 family.

The protein localises to the membrane. This is an uncharacterized protein from Schizosaccharomyces pombe (strain 972 / ATCC 24843) (Fission yeast).